A 425-amino-acid polypeptide reads, in one-letter code: Enolase (425 aa).

A (2R)-2-phosphoglycerate-binding site is contributed by glutamine 163. Catalysis depends on glutamate 205, which acts as the Proton donor. The Mg(2+) site is built by aspartate 242, glutamate 285, and aspartate 312. 4 residues coordinate (2R)-2-phosphoglycerate: lysine 337, arginine 366, serine 367, and lysine 388. The Proton acceptor role is filled by lysine 337.

Belongs to the enolase family. It depends on Mg(2+) as a cofactor.

It localises to the cytoplasm. The protein localises to the secreted. Its subcellular location is the cell surface. The enzyme catalyses (2R)-2-phosphoglycerate = phosphoenolpyruvate + H2O. It participates in carbohydrate degradation; glycolysis; pyruvate from D-glyceraldehyde 3-phosphate: step 4/5. Functionally, catalyzes the reversible conversion of 2-phosphoglycerate (2-PG) into phosphoenolpyruvate (PEP). It is essential for the degradation of carbohydrates via glycolysis. This chain is Enolase, found in Granulibacter bethesdensis (strain ATCC BAA-1260 / CGDNIH1).